We begin with the raw amino-acid sequence, 920 residues long: Protein translocase subunit SecA 2 (920 aa).

Residues Q91, 109–113 (GEGKT), and D527 contribute to the ATP site. The span at 859–870 (GEGSALDRRPTD) shows a compositional bias: basic and acidic residues. Residues 859–920 (GEGSALDRRP…KSRNRRRRKR (62 aa)) are disordered. Residues 906-920 (PHRPGKSRNRRRRKR) show a composition bias toward basic residues.

Belongs to the SecA family. As to quaternary structure, monomer and homodimer. Part of the essential Sec protein translocation apparatus which comprises SecA, SecYEG and auxiliary proteins SecDF. Other proteins may also be involved.

The protein localises to the cell membrane. It is found in the cytoplasm. The enzyme catalyses ATP + H2O + cellular proteinSide 1 = ADP + phosphate + cellular proteinSide 2.. Part of the Sec protein translocase complex. Interacts with the SecYEG preprotein conducting channel. Has a central role in coupling the hydrolysis of ATP to the transfer of proteins into and across the cell membrane, serving as an ATP-driven molecular motor driving the stepwise translocation of polypeptide chains across the membrane. This is Protein translocase subunit SecA 2 from Streptomyces avermitilis (strain ATCC 31267 / DSM 46492 / JCM 5070 / NBRC 14893 / NCIMB 12804 / NRRL 8165 / MA-4680).